Here is a 286-residue protein sequence, read N- to C-terminus: Secretory carrier-associated membrane protein 2 (286 aa).

2 stretches are compositionally biased toward basic and acidic residues: residues 1 to 10 (MAGRYDRNPF) and 54 to 63 (STKDMKKKEK). The segment at 1–63 (MAGRYDRNPF…STKDMKKKEK (63 aa)) is disordered. Over 1-126 (MAGRYDRNPF…LQRMQYLAFS (126 aa)) the chain is Cytoplasmic. Residues 52–89 (LDSTKDMKKKEKELQAKEAELNKRESELRRREEAASRA) are a coiled coil. Helical transmembrane passes span 127-147 (SLLG…AAWI), 152-172 (VMIW…AYVL), 189-209 (FGWF…SAVA), and 237-257 (IFYF…VVVI). Residues 258-286 (QQVYMYFRGSGKAAEMKREAARGAMRSAF) are Cytoplasmic-facing.

It belongs to the SCAMP family.

Its subcellular location is the cell membrane. It is found in the cytoplasmic vesicle. The protein localises to the secretory vesicle membrane. Its function is as follows. Probably involved in membrane trafficking. The chain is Secretory carrier-associated membrane protein 2 (SCAMP2) from Oryza sativa subsp. japonica (Rice).